Here is a 348-residue protein sequence, read N- to C-terminus: Protein pelota homolog (348 aa).

It belongs to the eukaryotic release factor 1 family. Pelota subfamily. In terms of assembly, monomer. A divalent metal cation serves as cofactor.

The protein localises to the cytoplasm. In terms of biological role, may function in recognizing stalled ribosomes, interact with stem-loop structures in stalled mRNA molecules, and effect endonucleolytic cleavage of the mRNA. May play a role in the release non-functional ribosomes and degradation of damaged mRNAs. Has endoribonuclease activity. The chain is Protein pelota homolog from Methanococcus maripaludis (strain C6 / ATCC BAA-1332).